We begin with the raw amino-acid sequence, 502 residues long: Probable cytosol aminopeptidase (502 aa).

Mn(2+) is bound by residues Lys-269 and Asp-274. The active site involves Lys-281. Mn(2+) is bound by residues Asp-292, Asp-351, and Glu-353. Arg-355 is an active-site residue.

This sequence belongs to the peptidase M17 family. Requires Mn(2+) as cofactor.

It localises to the cytoplasm. The enzyme catalyses Release of an N-terminal amino acid, Xaa-|-Yaa-, in which Xaa is preferably Leu, but may be other amino acids including Pro although not Arg or Lys, and Yaa may be Pro. Amino acid amides and methyl esters are also readily hydrolyzed, but rates on arylamides are exceedingly low.. It carries out the reaction Release of an N-terminal amino acid, preferentially leucine, but not glutamic or aspartic acids.. Presumably involved in the processing and regular turnover of intracellular proteins. Catalyzes the removal of unsubstituted N-terminal amino acids from various peptides. In Shewanella sediminis (strain HAW-EB3), this protein is Probable cytosol aminopeptidase.